Reading from the N-terminus, the 108-residue chain is uncharacterized protein (108 aa).

The next 3 helical transmembrane spans lie at 4–24 (IIFLFRAIWLALSLLILFFSM), 46–66 (GMMVICFPTGIVFFIALIFIG), and 81–101 (IMAIIIWLYFLSGGYIQWFVL).

Its subcellular location is the cell membrane. This is an uncharacterized protein from Escherichia coli O157:H7.